Reading from the N-terminus, the 342-residue chain is Heat-inducible transcription repressor HrcA (342 aa).

The protein belongs to the HrcA family.

In terms of biological role, negative regulator of class I heat shock genes (grpE-dnaK-dnaJ and groELS operons). Prevents heat-shock induction of these operons. This is Heat-inducible transcription repressor HrcA from Leptospira interrogans serogroup Icterohaemorrhagiae serovar copenhageni (strain Fiocruz L1-130).